The primary structure comprises 990 residues: Bifunctional glutamine synthetase adenylyltransferase/adenylyl-removing enzyme (990 aa).

The tract at residues 1–474 (MIFSAITADL…HYAKLFEGDP (474 aa)) is adenylyl removase. The adenylyl transferase stretch occupies residues 478–990 (AKLPPVDYGA…FSRLIGGEDA (513 aa)).

It belongs to the GlnE family. Requires Mg(2+) as cofactor.

The catalysed reaction is [glutamine synthetase]-O(4)-(5'-adenylyl)-L-tyrosine + phosphate = [glutamine synthetase]-L-tyrosine + ADP. The enzyme catalyses [glutamine synthetase]-L-tyrosine + ATP = [glutamine synthetase]-O(4)-(5'-adenylyl)-L-tyrosine + diphosphate. In terms of biological role, involved in the regulation of glutamine synthetase GlnA, a key enzyme in the process to assimilate ammonia. When cellular nitrogen levels are high, the C-terminal adenylyl transferase (AT) inactivates GlnA by covalent transfer of an adenylyl group from ATP to specific tyrosine residue of GlnA, thus reducing its activity. Conversely, when nitrogen levels are low, the N-terminal adenylyl removase (AR) activates GlnA by removing the adenylyl group by phosphorolysis, increasing its activity. The regulatory region of GlnE binds the signal transduction protein PII (GlnB) which indicates the nitrogen status of the cell. The chain is Bifunctional glutamine synthetase adenylyltransferase/adenylyl-removing enzyme from Rhodopseudomonas palustris (strain ATCC BAA-98 / CGA009).